The primary structure comprises 353 residues: UDP-3-O-acylglucosamine N-acyltransferase (353 aa).

The active-site Proton acceptor is the His242.

Belongs to the transferase hexapeptide repeat family. LpxD subfamily. In terms of assembly, homotrimer.

The enzyme catalyses a UDP-3-O-[(3R)-3-hydroxyacyl]-alpha-D-glucosamine + a (3R)-hydroxyacyl-[ACP] = a UDP-2-N,3-O-bis[(3R)-3-hydroxyacyl]-alpha-D-glucosamine + holo-[ACP] + H(+). The protein operates within bacterial outer membrane biogenesis; LPS lipid A biosynthesis. Functionally, catalyzes the N-acylation of UDP-3-O-acylglucosamine using 3-hydroxyacyl-ACP as the acyl donor. Is involved in the biosynthesis of lipid A, a phosphorylated glycolipid that anchors the lipopolysaccharide to the outer membrane of the cell. The protein is UDP-3-O-acylglucosamine N-acyltransferase of Pseudomonas paraeruginosa (strain DSM 24068 / PA7) (Pseudomonas aeruginosa (strain PA7)).